The sequence spans 485 residues: ATP-dependent protease ATPase subunit HslU (485 aa).

Residues I22 and 64–69 (GVGKTE) each bind ATP. The disordered stretch occupies residues 146–189 (KKTAATSAQPQDVSQASSGTTISLPSVSSTAQAEEHKAQNENDM). The span at 149 to 177 (AATSAQPQDVSQASSGTTISLPSVSSTAQ) shows a compositional bias: polar residues. The span at 178–189 (AEEHKAQNENDM) shows a compositional bias: basic and acidic residues. ATP-binding residues include D297, E363, and R435.

This sequence belongs to the ClpX chaperone family. HslU subfamily. In terms of assembly, a double ring-shaped homohexamer of HslV is capped on each side by a ring-shaped HslU homohexamer. The assembly of the HslU/HslV complex is dependent on binding of ATP.

It is found in the cytoplasm. In terms of biological role, ATPase subunit of a proteasome-like degradation complex; this subunit has chaperone activity. The binding of ATP and its subsequent hydrolysis by HslU are essential for unfolding of protein substrates subsequently hydrolyzed by HslV. HslU recognizes the N-terminal part of its protein substrates and unfolds these before they are guided to HslV for hydrolysis. This chain is ATP-dependent protease ATPase subunit HslU, found in Treponema denticola (strain ATCC 35405 / DSM 14222 / CIP 103919 / JCM 8153 / KCTC 15104).